The primary structure comprises 96 residues: Small ribosomal subunit protein bS21 (96 aa).

Positions 37 to 52 (EKPSEKKAREKAEAVR) are enriched in basic and acidic residues. The tract at residues 37–96 (EKPSEKKAREKAEAVRRARKLARKKLQREGLLPSKPKPVFGADRGRGAAGGAGGAPRPAR) is disordered. Over residues 53-62 (RARKLARKKL) the composition is skewed to basic residues.

The protein belongs to the bacterial ribosomal protein bS21 family.

This is Small ribosomal subunit protein bS21 from Afipia carboxidovorans (strain ATCC 49405 / DSM 1227 / KCTC 32145 / OM5) (Oligotropha carboxidovorans).